The chain runs to 77 residues: Small ribosomal subunit protein uS17c (77 aa).

The protein belongs to the universal ribosomal protein uS17 family. Part of the 30S ribosomal subunit.

Its subcellular location is the plastid. The protein localises to the chloroplast. In terms of biological role, one of the primary rRNA binding proteins, it binds specifically to the 5'-end of 16S ribosomal RNA. This chain is Small ribosomal subunit protein uS17c (rps17), found in Cyanidium caldarium (Red alga).